The following is a 271-amino-acid chain: MSDEEVEHVEEEYEEEEEAQEEAPPPPAEVPEVHEEVHEVHEPEEVQEEEKPRPRLTAPKIPEGEKVDFDDIQKKRQNKDLMELQALIDSHFEARKKEEEELVALKERIEKRRAERAEQQRIRAEKERERQNRLAEEKARREEEDAKRRAEDDLKKKKALSSMGANYSSYLAKADQKRGKKQTAREMKKKVLAERRKPLNIDHLSEDKLRDKAKELWDTLYQLETDKFEYGEKLKRQKYDITNLRSRIDQAQKHSKKAGTAPKGKVGGRWK.

Over residues 1–21 (MSDEEVEHVEEEYEEEEEAQE) the composition is skewed to acidic residues. The disordered stretch occupies residues 1–74 (MSDEEVEHVE…EKVDFDDIQK (74 aa)). N-acetylserine is present on serine 2. Residue serine 2 is modified to Phosphoserine. Basic and acidic residues-rich tracts occupy residues 31–53 (PEVH…EKPR) and 62–74 (PEGE…DIQK). Serine 90 is subject to Phosphoserine. Residues 113–155 (RAERAEQQRIRAEKERERQNRLAEEKARREEEDAKRRAEDDLK) show a composition bias toward basic and acidic residues. Residues 113–194 (RAERAEQQRI…REMKKKVLAE (82 aa)) form a disordered region. Serine 161, serine 168, and serine 169 each carry phosphoserine. The segment covering 183 to 194 (TAREMKKKVLAE) has biased composition (basic and acidic residues). Serine 205 is modified (phosphoserine). Tyrosine 221 carries the post-translational modification Phosphotyrosine. The disordered stretch occupies residues 248 to 271 (IDQAQKHSKKAGTAPKGKVGGRWK).

The protein belongs to the troponin T family.

Functionally, troponin T is the tropomyosin-binding subunit of troponin, the thin filament regulatory complex which confers calcium-sensitivity to striated muscle actomyosin ATPase activity. The polypeptide is Troponin T, fast skeletal muscle (Tnnt3) (Bos taurus (Bovine)).